The sequence spans 257 residues: Global transcriptional regulator CodY (257 aa).

The interval 1–155 is GAF domain; sequence MSLLSKTREL…AATVIGMEIL (155 aa). Positions 22, 24, 43, 44, 45, and 47 each coordinate GTP. 3 residues coordinate L-isoleucine: Arg-61, Thr-96, and Phe-98. Positions 153 and 158 each coordinate GTP. The segment at residues 203–222 is a DNA-binding region (H-T-H motif); the sequence is ASKVADRVGITRSVIVNALR.

The protein belongs to the CodY family. As to quaternary structure, homodimer. Homotetramer. May form homodimers under conditions in which energy sources are sufficient (active state) and homotetramers under insufficient nutrient conditions (inactive state).

Its subcellular location is the cytoplasm. Its activity is regulated as follows. Activity of CodY is modulated by interaction with two types of effectors: the branched-chain amino acids (BCAAs) leucine, isoleucine and valine, which are signals of the nutritional status of the cell, and GTP, which may signal the energetic status of the cell. Its function is as follows. DNA-binding global transcriptional regulator which is involved in the adaptive response to starvation and acts by directly or indirectly controlling the expression of numerous genes in response to nutrient availability. During rapid exponential growth, CodY is highly active and represses genes whose products allow adaptation to nutrient depletion. The polypeptide is Global transcriptional regulator CodY (Staphylococcus aureus (strain Mu3 / ATCC 700698)).